Consider the following 640-residue polypeptide: Probable threonine--tRNA ligase, cytoplasmic (640 aa).

A TGS domain is found at 1–63; the sequence is MYEVKLKVEL…LKDCKLELMT (63 aa).

This sequence belongs to the class-II aminoacyl-tRNA synthetase family.

The protein localises to the cytoplasm. The catalysed reaction is tRNA(Thr) + L-threonine + ATP = L-threonyl-tRNA(Thr) + AMP + diphosphate + H(+). This is Probable threonine--tRNA ligase, cytoplasmic from Encephalitozoon cuniculi (strain GB-M1) (Microsporidian parasite).